We begin with the raw amino-acid sequence, 356 residues long: UDP-N-acetylglucosamine--N-acetylmuramyl-(pentapeptide) pyrophosphoryl-undecaprenol N-acetylglucosamine transferase (356 aa).

Residues 12-14 (SGG), Asn120, Arg163, Ser187, and Gln286 contribute to the UDP-N-acetyl-alpha-D-glucosamine site.

This sequence belongs to the glycosyltransferase 28 family. MurG subfamily.

The protein resides in the cell inner membrane. It carries out the reaction di-trans,octa-cis-undecaprenyl diphospho-N-acetyl-alpha-D-muramoyl-L-alanyl-D-glutamyl-meso-2,6-diaminopimeloyl-D-alanyl-D-alanine + UDP-N-acetyl-alpha-D-glucosamine = di-trans,octa-cis-undecaprenyl diphospho-[N-acetyl-alpha-D-glucosaminyl-(1-&gt;4)]-N-acetyl-alpha-D-muramoyl-L-alanyl-D-glutamyl-meso-2,6-diaminopimeloyl-D-alanyl-D-alanine + UDP + H(+). Its pathway is cell wall biogenesis; peptidoglycan biosynthesis. In terms of biological role, cell wall formation. Catalyzes the transfer of a GlcNAc subunit on undecaprenyl-pyrophosphoryl-MurNAc-pentapeptide (lipid intermediate I) to form undecaprenyl-pyrophosphoryl-MurNAc-(pentapeptide)GlcNAc (lipid intermediate II). In Pelagibacter ubique (strain HTCC1062), this protein is UDP-N-acetylglucosamine--N-acetylmuramyl-(pentapeptide) pyrophosphoryl-undecaprenol N-acetylglucosamine transferase.